The sequence spans 625 residues: MKLFQIFPLLLSLTSVTLAADDFCNATGFQGQSVVSTGHDVKKIGNIDYEQWADGGNNSATFYSDGSFKCNFSNTKDYLCRSGVAFSQAKYPSEIGHIEAEYRLVKKSASNVGYSYVGVYGWTLQSGISGVYEYYIVDNWLSQWRPGDWVGNTKFGDFTIDGGVYTVYKNVNGNLTQYFSLRKSERTCGTIDVTAHFAQWEKLGLKMPKITEIKVLAEAGNTGGGCSGSVEIPYAKIYINGKDQDGKSKGGSSSGGSNGQGLGNGQGNGQGQGNGQGQSATGSGKCPSTITSQGYKCCSSNCDIIYRDQSGDWGVENDEWCGCGSRVPKTTNCPSSIKNQGYKCCSDSCEIVLTDSDGDWGIENDEWCGCGIKNTTPTTTTKKSNNSQPTQGQSNNNSSTNTNFCSTSKHSGQSVTETSNKVGSIGGVGYELWADSGNNSATFYSDGSFSCSFRNAKDYLCRSGLSFDSTKTYQQLGHMYADFKLVKQNIQNVDYSYVGIYGWTRNPLVEFYVVDNWLSQWRPGDWVGNKKHGDFTIDGAKYTVYENTRTGPSIDGNTTFKQYFSIRQQARDCGTIDITAHFEQWEKLGMRMGKMHEAKVLGEAGSTGSGTSGTADFPYAKVYIK.

An N-terminal signal peptide occupies residues 1–19 (MKLFQIFPLLLSLTSVTLA). The region spanning 35–231 (VSTGHDVKKI…TGGGCSGSVE (197 aa)) is the GH11 1 domain. The interval 245–283 (DGKSKGGSSSGGSNGQGLGNGQGNGQGQGNGQGQSATGS) is disordered. Positions 252–276 (SSSGGSNGQGLGNGQGNGQGQGNGQ) are enriched in gly residues. Residues 255–279 (GGSNGQGLGNGQGNGQGQGNGQGQS) are linker. Tandem repeats lie at residues 259-268 (GQGLGNGQGN) and 269-278 (GQGQGNGQGQ). The segment at 259–278 (GQGLGNGQGNGQGQGNGQGQ) is 2 X 10 AA tandem repeats of G-Q-G-[LQ]-G-N-G-Q-G-[NQ]. CBM10 domains are found at residues 285 to 324 (KCPSTITSQGYKCCSSNCDIIYRDQSGDWGVENDEWCGCG) and 332 to 371 (NCPSSIKNQGYKCCSDSCEIVLTDSDGDWGIENDEWCGCG). A linker region spans residues 374–403 (NTTPTTTTKKSNNSQPTQGQSNNNSSTNTN). The disordered stretch occupies residues 379 to 399 (TTTKKSNNSQPTQGQSNNNSS). One can recognise a GH11 2 domain in the interval 416–617 (TETSNKVGSI…GSGTSGTADF (202 aa)). Residue glutamate 510 is the Nucleophile of the active site. Residue glutamate 603 is the Proton donor of the active site.

Belongs to the glycosyl hydrolase 11 (cellulase G) family.

The catalysed reaction is Endohydrolysis of (1-&gt;4)-beta-D-xylosidic linkages in xylans.. It participates in glycan degradation; xylan degradation. Hydrolyzes 1,4-beta linked polysaccharide backbones of xylans, one of the major hemicellulose components in hardwoods and softwoods. It is more active against xylopentaose than xylotetraose, has trace activity against xylotriose. The major products released from hydrolysis of xylooligosaccharides are xylobiose and xylotriose. The reiterated 40 AA domain is involved in binding the cellulase-hemicellulase complex. The polypeptide is Endo-1,4-beta-xylanase A (XYNA) (Piromyces sp).